Consider the following 358-residue polypeptide: UDP-N-acetylglucosamine--N-acetylmuramyl-(pentapeptide) pyrophosphoryl-undecaprenol N-acetylglucosamine transferase (358 aa).

UDP-N-acetyl-alpha-D-glucosamine is bound by residues serine 197 and glutamine 288.

This sequence belongs to the glycosyltransferase 28 family. MurG subfamily.

It is found in the cell membrane. The enzyme catalyses Mur2Ac(oyl-L-Ala-gamma-D-Glu-L-Lys-D-Ala-D-Ala)-di-trans,octa-cis-undecaprenyl diphosphate + UDP-N-acetyl-alpha-D-glucosamine = beta-D-GlcNAc-(1-&gt;4)-Mur2Ac(oyl-L-Ala-gamma-D-Glu-L-Lys-D-Ala-D-Ala)-di-trans,octa-cis-undecaprenyl diphosphate + UDP + H(+). It participates in cell wall biogenesis; peptidoglycan biosynthesis. Its function is as follows. Cell wall formation. Catalyzes the transfer of a GlcNAc subunit on undecaprenyl-pyrophosphoryl-MurNAc-pentapeptide (lipid intermediate I) to form undecaprenyl-pyrophosphoryl-MurNAc-(pentapeptide)GlcNAc (lipid intermediate II). The polypeptide is UDP-N-acetylglucosamine--N-acetylmuramyl-(pentapeptide) pyrophosphoryl-undecaprenol N-acetylglucosamine transferase (Streptococcus agalactiae serotype Ia (strain ATCC 27591 / A909 / CDC SS700)).